A 351-amino-acid chain; its full sequence is Deoxyguanosinetriphosphate triphosphohydrolase-like protein (351 aa).

The HD domain maps to 75 to 196 (RLTHTLEVAE…VRVADIIAYL (122 aa)).

It belongs to the dGTPase family. Type 2 subfamily.

This Desulfatibacillum aliphaticivorans protein is Deoxyguanosinetriphosphate triphosphohydrolase-like protein.